The sequence spans 317 residues: Ribosomal RNA small subunit methyltransferase H (317 aa).

Residues Ala-37–His-39, Asp-56, Phe-85, Asp-106, and Gln-113 contribute to the S-adenosyl-L-methionine site.

The protein belongs to the methyltransferase superfamily. RsmH family.

The protein localises to the cytoplasm. It catalyses the reaction cytidine(1402) in 16S rRNA + S-adenosyl-L-methionine = N(4)-methylcytidine(1402) in 16S rRNA + S-adenosyl-L-homocysteine + H(+). Its function is as follows. Specifically methylates the N4 position of cytidine in position 1402 (C1402) of 16S rRNA. The chain is Ribosomal RNA small subunit methyltransferase H from Lactococcus lactis subsp. lactis (strain IL1403) (Streptococcus lactis).